The sequence spans 110 residues: Protein YcgL (110 aa).

The YcgL domain occupies 14-98; the sequence is MFCVIYRSSK…PPEDLLKQHL (85 aa). The interval 87 to 110 is disordered; that stretch reads PPPPEDLLKQHLSSVGQNTSPADR. Residues 97 to 110 are compositionally biased toward polar residues; the sequence is HLSSVGQNTSPADR.

The chain is Protein YcgL from Salmonella choleraesuis (strain SC-B67).